The primary structure comprises 495 residues: SH2 domain-containing adapter protein E (495 aa).

Disordered stretches follow at residues 51–190, 203–233, and 256–327; these read TVSE…DKGK, DYAD…EPYD, and LLDS…EYEQ. Phosphoserine is present on Ser107. Residues 135-144 are compositionally biased toward polar residues; it reads TKSSGCSTYI. Residues 148 to 157 show a composition bias toward basic and acidic residues; it reads IKVDTQEKNG. Residues 162–181 are compositionally biased toward low complexity; sequence PSSSSSSSSSSSSASSSPSS. Composition is skewed to basic and acidic residues over residues 208-224 and 301-327; these read YDAK…RVGE and PRAE…EYEQ. An SH2 domain is found at 395–490; sequence WYHGAISRAE…AEHMTLLYPV (96 aa).

The protein is SH2 domain-containing adapter protein E (SHE) of Homo sapiens (Human).